The primary structure comprises 101 residues: uncharacterized protein (101 aa).

The first 25 residues, 1–25, serve as a signal peptide directing secretion; it reads MRKKRLLSRISFSSLFLLCGTLLSA. Cys-26 carries the N-palmitoyl cysteine lipid modification. Cys-26 carries S-diacylglycerol cysteine lipidation.

This sequence belongs to the MG439/MG440 family.

The protein resides in the cell membrane. This is an uncharacterized protein from Mycoplasma pneumoniae (strain ATCC 29342 / M129 / Subtype 1) (Mycoplasmoides pneumoniae).